Reading from the N-terminus, the 348-residue chain is Phosphoribosylformylglycinamidine cyclo-ligase (348 aa).

Belongs to the AIR synthase family.

It is found in the cytoplasm. The enzyme catalyses 2-formamido-N(1)-(5-O-phospho-beta-D-ribosyl)acetamidine + ATP = 5-amino-1-(5-phospho-beta-D-ribosyl)imidazole + ADP + phosphate + H(+). Its pathway is purine metabolism; IMP biosynthesis via de novo pathway; 5-amino-1-(5-phospho-D-ribosyl)imidazole from N(2)-formyl-N(1)-(5-phospho-D-ribosyl)glycinamide: step 2/2. This chain is Phosphoribosylformylglycinamidine cyclo-ligase, found in Cereibacter sphaeroides (strain KD131 / KCTC 12085) (Rhodobacter sphaeroides).